Consider the following 29-residue polypeptide: Cyclotide mang-A (29 aa).

Residues 1 to 29 (GFPTCGETCTLGTCNTPGCTCSWPICTRD) constitute a cross-link (cyclopeptide (Gly-Asp)). Intrachain disulfides connect Cys5-Cys19, Cys9-Cys21, and Cys14-Cys26.

Belongs to the cyclotide family. Moebius subfamily. This is a cyclic peptide.

Probably participates in a plant defense mechanism. The polypeptide is Cyclotide mang-A (Melicytus angustifolius (Hymenanthera angustifolia)).